The following is a 146-amino-acid chain: 3-hydroxyacyl-[acyl-carrier-protein] dehydratase FabZ (146 aa).

His-48 is a catalytic residue.

This sequence belongs to the thioester dehydratase family. FabZ subfamily.

It localises to the cytoplasm. It carries out the reaction a (3R)-hydroxyacyl-[ACP] = a (2E)-enoyl-[ACP] + H2O. Functionally, involved in unsaturated fatty acids biosynthesis. Catalyzes the dehydration of short chain beta-hydroxyacyl-ACPs and long chain saturated and unsaturated beta-hydroxyacyl-ACPs. This chain is 3-hydroxyacyl-[acyl-carrier-protein] dehydratase FabZ, found in Acetivibrio thermocellus (strain ATCC 27405 / DSM 1237 / JCM 9322 / NBRC 103400 / NCIMB 10682 / NRRL B-4536 / VPI 7372) (Clostridium thermocellum).